The following is a 384-amino-acid chain: Zinc finger protein GLIS2 homolog (384 aa).

The C2H2-type 1 zinc-finger motif lies at 128–153 (FVCNWTDCDRVFDTLDALAQHVTQRH). The C2H2-type 2; degenerate zinc finger occupies 163-190 (YYCRWRGCQRSERGFNARYKMLVHTRTH). C2H2-type zinc fingers lie at residues 196 to 218 (HRCHLCEKSFSRAENLKIHIRSH), 224 to 248 (YKCSFEGCQKAYSNSSDRFKHTRTH), and 254 to 280 (YMCKVAGCQKRYTDPSSLRKHVKTFKH). Residues 321–343 (SSSSARYYDDSNNEPSDYSLKPK) are disordered.

This sequence belongs to the GLI C2H2-type zinc-finger protein family.

The protein localises to the nucleus. Functionally, transcription factor which represses a set of lipase genes involved in fat catabolism. This is Zinc finger protein GLIS2 homolog (sug) from Drosophila melanogaster (Fruit fly).